The primary structure comprises 1870 residues: Dedicator of cytokinesis protein 5 (1870 aa).

Residues 8 to 69 (KRQKYGVAIY…PETYIHLKEA (62 aa)) form the SH3 domain. Ser-365 carries the post-translational modification Phosphoserine. The 185-residue stretch at 443-627 (RNDIYVTLIH…DSFQIATLIC (185 aa)) folds into the C2 DOCK-type domain. Lys-818 bears the N6-acetyllysine mark. The DOCKER domain maps to 1231–1642 (YKEKKREDIY…VEKHYGVITL (412 aa)). Positions 1679-1702 (VVSTSSNSSDNAPSRPGSDGSILE) are disordered. 4 positions are modified to phosphoserine: Ser-1756, Ser-1766, Ser-1785, and Ser-1789. The segment at 1772-1870 (NRLSPFHGSS…GIPTSEPGSQ (99 aa)) is disordered. A compositionally biased stretch (pro residues) spans 1784–1794 (QSTPLSPPPLT). Thr-1794 is subject to Phosphothreonine. Residues 1797 to 1808 (ATRTLSSPSLQT) show a composition bias toward polar residues. Phosphothreonine is present on Thr-1814. Residues 1815 to 1824 (PVPPPPPPKS) show a composition bias toward pro residues. Residues Ser-1834 and Ser-1869 each carry the phosphoserine modification.

This sequence belongs to the DOCK family. As to quaternary structure, interacts with CRK and CRKL. Interacts (via N-terminus) with tensin TNS3 (via N-terminus); the interaction increases DOCK5 guanine nucleotide exchange activity towards Rac. Interacts with ELMO1.

Its subcellular location is the cytoplasm. It is found in the cell membrane. It localises to the cell projection. The protein resides in the podosome. Functionally, guanine nucleotide exchange factor (GEF) for Rho and Rac. GEF proteins activate small GTPases by exchanging bound GDP for free GTP. Along with DOCK1, mediates CRK/CRKL regulation of epithelial and endothelial cell spreading and migration on type IV collagen. The chain is Dedicator of cytokinesis protein 5 (DOCK5) from Homo sapiens (Human).